The primary structure comprises 45 residues: VVLGPASDGRNAAANVKAPDLIALTVRNDCCHNAPCRNNHPGICG.

The propeptide occupies 1-27 (VVLGPASDGRNAAANVKAPDLIALTVR). 2 cysteine pairs are disulfide-bonded: Cys30-Cys36 and Cys31-Cys44. Residues 32-34 (HNA) form a lacks the Ser-Xaa-Pro motif that is crucial for potent interaction with nAChR region. Cys44 bears the Cysteine amide mark.

This sequence belongs to the conotoxin A superfamily. Expressed by the venom duct.

It localises to the secreted. Its function is as follows. Alpha-conotoxins act on postsynaptic membranes, they bind to the nicotinic acetylcholine receptors (nAChR) and thus inhibit them. Has possibly a distinct nAChR binding mode from other alpha-conotoxins, due to a different three residue motif (lacks the Ser-Xaa-Pro motif). The protein is Alpha-conotoxin-like Lp1.10 of Conus leopardus (Leopard cone).